The primary structure comprises 300 residues: Bifunctional protein FolD (300 aa).

NADP(+)-binding positions include 172–174 (GRS), serine 206, and isoleucine 247.

This sequence belongs to the tetrahydrofolate dehydrogenase/cyclohydrolase family. Homodimer.

It carries out the reaction (6R)-5,10-methylene-5,6,7,8-tetrahydrofolate + NADP(+) = (6R)-5,10-methenyltetrahydrofolate + NADPH. It catalyses the reaction (6R)-5,10-methenyltetrahydrofolate + H2O = (6R)-10-formyltetrahydrofolate + H(+). It functions in the pathway one-carbon metabolism; tetrahydrofolate interconversion. In terms of biological role, catalyzes the oxidation of 5,10-methylenetetrahydrofolate to 5,10-methenyltetrahydrofolate and then the hydrolysis of 5,10-methenyltetrahydrofolate to 10-formyltetrahydrofolate. The sequence is that of Bifunctional protein FolD from Rhodopirellula baltica (strain DSM 10527 / NCIMB 13988 / SH1).